The primary structure comprises 115 residues: Putative UPF0377 protein YHL045W (115 aa).

A helical membrane pass occupies residues 10–30 (ACIFIDSVCEGIVFWGLCLFV).

This sequence belongs to the UPF0377 family.

The protein resides in the membrane. The protein is Putative UPF0377 protein YHL045W of Saccharomyces cerevisiae (strain ATCC 204508 / S288c) (Baker's yeast).